Here is a 768-residue protein sequence, read N- to C-terminus: Degenerin mec-4 (768 aa).

Residues methionine 1–alanine 109 lie on the Cytoplasmic side of the membrane. Residues valine 110–leucine 130 traverse the membrane as a helical segment. The Extracellular portion of the chain corresponds to aspartate 131–glutamine 718. Disordered regions lie at residues alanine 187–aspartate 221 and glycine 237–threonine 260. Residues glycine 189–isoleucine 200 show a composition bias toward basic and acidic residues. Low complexity predominate over residues alanine 203–lysine 212. Acidic residues predominate over residues glutamate 243–glutamate 252. N-linked (GlcNAc...) asparagine glycosylation is found at asparagine 336, asparagine 357, asparagine 480, asparagine 484, asparagine 503, and asparagine 671. The helical transmembrane segment at leucine 719 to glutamate 739 threads the bilayer. Residues threonine 740–phenylalanine 768 are Cytoplasmic-facing.

It belongs to the amiloride-sensitive sodium channel (TC 1.A.6) family. As to quaternary structure, the channel is probably composed of at least the mec-2, mec-4, mec-6 and mec-10 subunits.

It is found in the membrane. Its function is as follows. Probable sodium channel subunit. May be needed for mechanosensory transduction (touch sensitivity). Negatively regulates the turning step of male mating behavior. This is Degenerin mec-4 (mec-4) from Caenorhabditis briggsae.